A 152-amino-acid polypeptide reads, in one-letter code: Superoxide dismutase [Cu-Zn] (152 aa).

Cu cation-binding residues include H45, H47, and H62. Residues C56 and C145 are joined by a disulfide bond. Zn(2+)-binding residues include H62, H70, H79, and D82. H119 lines the Cu cation pocket.

Belongs to the Cu-Zn superoxide dismutase family. Homodimer. Requires Cu cation as cofactor. Zn(2+) is required as a cofactor.

It is found in the cytoplasm. It catalyses the reaction 2 superoxide + 2 H(+) = H2O2 + O2. Functionally, destroys radicals which are normally produced within the cells and which are toxic to biological systems. In Brassica oleracea var. capitata (Cabbage), this protein is Superoxide dismutase [Cu-Zn] (SODCC).